Here is a 139-residue protein sequence, read N- to C-terminus: Large ribosomal subunit protein uL16 (139 aa).

Basic residues predominate over residues 1–20 (MLIPRRVKHRKQHHPKRRGQ). Positions 1-25 (MLIPRRVKHRKQHHPKRRGQAKGGT) are disordered.

Belongs to the universal ribosomal protein uL16 family. In terms of assembly, part of the 50S ribosomal subunit.

Functionally, binds 23S rRNA and is also seen to make contacts with the A and possibly P site tRNAs. The polypeptide is Large ribosomal subunit protein uL16 (Streptomyces avermitilis (strain ATCC 31267 / DSM 46492 / JCM 5070 / NBRC 14893 / NCIMB 12804 / NRRL 8165 / MA-4680)).